A 113-amino-acid chain; its full sequence is Large ribosomal subunit protein uL22 (113 aa).

This sequence belongs to the universal ribosomal protein uL22 family. Part of the 50S ribosomal subunit.

Its function is as follows. This protein binds specifically to 23S rRNA; its binding is stimulated by other ribosomal proteins, e.g. L4, L17, and L20. It is important during the early stages of 50S assembly. It makes multiple contacts with different domains of the 23S rRNA in the assembled 50S subunit and ribosome. In terms of biological role, the globular domain of the protein is located near the polypeptide exit tunnel on the outside of the subunit, while an extended beta-hairpin is found that lines the wall of the exit tunnel in the center of the 70S ribosome. The polypeptide is Large ribosomal subunit protein uL22 (Carboxydothermus hydrogenoformans (strain ATCC BAA-161 / DSM 6008 / Z-2901)).